The sequence spans 382 residues: Na(+)/H(+) antiporter NhaA 1 (382 aa).

Helical transmembrane passes span 10–30 (EFSI…NISP), 45–65 (FSFH…IAAA), 87–107 (LLAT…LNAL), 116–136 (GWGI…SLVF), 145–165 (FLLL…ALFY), 170–190 (LPAA…AALL), 211–231 (AGLF…VPFL), 252–272 (LASF…LFGL), 275–295 (AGVT…SLVI), 326–346 (LVGL…GEAF), and 353–373 (GAAK…LAAG).

The protein belongs to the NhaA Na(+)/H(+) (TC 2.A.33) antiporter family.

The protein localises to the cell inner membrane. The catalysed reaction is Na(+)(in) + 2 H(+)(out) = Na(+)(out) + 2 H(+)(in). Functionally, na(+)/H(+) antiporter that extrudes sodium in exchange for external protons. This Pelobacter propionicus (strain DSM 2379 / NBRC 103807 / OttBd1) protein is Na(+)/H(+) antiporter NhaA 1.